The primary structure comprises 141 residues: HTH-type transcriptional repressor NsrR (141 aa).

In terms of domain architecture, HTH rrf2-type spans 2-129 (QLTSFTDYGL…DNYTLADLVE (128 aa)). Residues 28–51 (ISQVTEVYGVSRNHMVKIINQLSR) constitute a DNA-binding region (H-T-H motif). Residues Cys91, Cys96, and Cys102 each coordinate [2Fe-2S] cluster.

[2Fe-2S] cluster is required as a cofactor.

Nitric oxide-sensitive repressor of genes involved in protecting the cell against nitrosative stress. May require iron for activity. In Enterobacter sp. (strain 638), this protein is HTH-type transcriptional repressor NsrR.